We begin with the raw amino-acid sequence, 149 residues long: Urease accessory protein UreE (149 aa).

It belongs to the UreE family.

It localises to the cytoplasm. In terms of biological role, involved in urease metallocenter assembly. Binds nickel. Probably functions as a nickel donor during metallocenter assembly. This chain is Urease accessory protein UreE, found in Prochlorococcus marinus (strain AS9601).